The primary structure comprises 251 residues: Acidic leucine-rich nuclear phosphoprotein 32 family member B (251 aa).

3 LRR repeats span residues 16-40 (PAAV…LTAE), 43-64 (NLEF…PKLP), and 65-84 (KLKK…DMLA). K86 is modified (N6-acetyllysine). The stretch at 89–110 (NLTHLNLSGNKLKDISTLEPLK) is one LRR 4 repeat. Residues 123–161 (CEVTNLNDYRESVFKLLPQLTYLDGYDREDQEAPDSDAE) form the LRRCT domain. The segment covering 149-233 (DREDQEAPDS…DEDEDEEEEE (85 aa)) has biased composition (acidic residues). A disordered region spans residues 149-251 (DREDQEAPDS…RETDDEGEDD (103 aa)). S158 is subject to Phosphoserine. A compositionally biased stretch (basic and acidic residues) spans 234 to 244 (GGKGEKRKRET). The short motif at 239 to 242 (KRKR) is the Nuclear localization signal element. A Phosphothreonine modification is found at T244.

It belongs to the ANP32 family. In terms of assembly, interacts with histones H3 and H4. Interacts with KLF5; this interaction induces promoter region-specific histone incorporation and inhibition of histone acetylation by ANP32B. As to quaternary structure, (Microbial infection) Interacts with Sendai virus protein M. (Microbial infection) Interacts with Measles virus protein M. In terms of assembly, (Microbial infection) Interacts with Hendra virus protein M; this interaction promotes nuclear localization of M. As to quaternary structure, (Microbial infection) Interacts with influenza virus B protein PB2; this interaction strongly supports influenza B virus replication. Some glutamate residues are glycylated by TTLL8. This modification occurs exclusively on glutamate residues and results in a glycine chain on the gamma-carboxyl group. Post-translationally, directly cleaved by caspase-3/CASP3. In terms of tissue distribution, expressed in heart, lung, pancreas, prostate and in spleen, thymus and placenta.

Its subcellular location is the nucleus. It localises to the cytoplasm. Multifunctional protein that is involved in the regulation of many processes including cell proliferation, apoptosis, cell cycle progression or transcription. Regulates the proliferation of neuronal stem cells, differentiation of leukemic cells and progression from G1 to S phase of the cell cycle. As negative regulator of caspase-3-dependent apoptosis, may act as an antagonist of ANP32A in regulating tissue homeostasis. Exhibits histone chaperone properties, able to recruit histones to certain promoters, thus regulating the transcription of specific genes. Also plays an essential role in the nucleocytoplasmic transport of specific mRNAs via the uncommon nuclear mRNA export receptor XPO1/CRM1. Participates in the regulation of adequate adaptive immune responses by acting on mRNA expression and cell proliferation. In terms of biological role, (Microbial infection) Plays an essential role in influenza A and B viral genome replication. Also plays a role in foamy virus mRNA export from the nucleus to the cytoplasm. The sequence is that of Acidic leucine-rich nuclear phosphoprotein 32 family member B (ANP32B) from Homo sapiens (Human).